A 116-amino-acid polypeptide reads, in one-letter code: uncharacterized protein (116 aa).

This is an uncharacterized protein from Homo sapiens (Human).